The primary structure comprises 239 residues: Lytic polysaccharide monooxygenase-like protein X325 (239 aa).

Residues 1–24 (MVLPSSVSQWAALIALLCAGLANA) form the signal peptide. His-25 is a binding site for Cu(2+). Asn-41, Asn-56, Asn-79, Asn-117, Asn-150, and Asn-197 each carry an N-linked (GlcNAc...) asparagine glycan. Intrachain disulfides connect Cys-71/Cys-176 and Cys-141/Cys-195. Ser-214 carries GPI-anchor amidated serine lipidation. Positions 215 to 239 (AAAPKSSLMSVLPVYMVALLSWAMM) are cleaved as a propeptide — removed in mature form.

It belongs to the X325 family. Cu(2+) is required as a cofactor.

The protein resides in the cell membrane. Functionally, lytic polysaccharide monooxygenase-like protein that has diverged to biological functions other than polysaccharide degradation since it does not perform oxidative cleavage of polysaccharides. Acts as a cell surface-bound protein that functions in the copper-accumulation pathway. May also act as the major cell wall sensor that regulates MAP kinase-dependent hyphal anastomosis, the fusion of hyphal cells. The sequence is that of Lytic polysaccharide monooxygenase-like protein X325 from Aspergillus fumigatus (strain ATCC MYA-4609 / CBS 101355 / FGSC A1100 / Af293) (Neosartorya fumigata).